The chain runs to 769 residues: Serine protease HtrA-like (769 aa).

A compositionally biased stretch (basic residues) spans 1–20 (MDIGKKHVIPKSQYRRKRRE). The segment at 1–390 (MDIGKKHVIP…ATSKLNKGRA (390 aa)) is disordered. Composition is skewed to basic and acidic residues over residues 21 to 64 (FFHN…ERFK) and 71 to 108 (LEQR…DVSK). Residues 126–137 (YEQNSEATLSTK) are compositionally biased toward polar residues. The segment covering 138 to 186 (STDKVESTEMRKLSSDKNKVGHEEQHVLSKPSEHDKETRIDSESSRTDS) has biased composition (basic and acidic residues). Residues 247–262 (QQSQNEQTKTYTYGDS) show a composition bias toward polar residues. Basic and acidic residues-rich tracts occupy residues 264–296 (QNDK…HIVD) and 310–330 (KTDD…HKQN). Over residues 331–347 (ADSSETVGYQSQSTASH) the composition is skewed to polar residues. The segment covering 348–364 (RSTEKRNISINDHDKLN) has biased composition (basic and acidic residues). Residues 365 to 390 (GQKTNTKTSANNNQKKATSKLNKGRA) are compositionally biased toward polar residues. Residues 410–430 (LVILMGIIILIVILNAIFNNV) traverse the membrane as a helical segment. Active-site charge relay system residues include H504, D534, and S619. In terms of domain architecture, PDZ spans 680–733 (IASLNSFERQAVKLPGKVKNGVVVDQVDNNGLADQSGLKKGDVITELDGKLLED).

It belongs to the peptidase S1C family.

It is found in the cell membrane. This Staphylococcus aureus (strain USA300) protein is Serine protease HtrA-like.